The primary structure comprises 89 residues: Small ribosomal subunit protein uS14 (89 aa).

Belongs to the universal ribosomal protein uS14 family. Part of the 30S ribosomal subunit. Contacts proteins S3 and S10.

Binds 16S rRNA, required for the assembly of 30S particles and may also be responsible for determining the conformation of the 16S rRNA at the A site. This chain is Small ribosomal subunit protein uS14, found in Leuconostoc mesenteroides subsp. mesenteroides (strain ATCC 8293 / DSM 20343 / BCRC 11652 / CCM 1803 / JCM 6124 / NCDO 523 / NBRC 100496 / NCIMB 8023 / NCTC 12954 / NRRL B-1118 / 37Y).